The chain runs to 241 residues: DNA-binding dual master transcriptional regulator RpaA (241 aa).

The region spanning 3-119 is the Response regulatory domain; it reads RILIIDDDPA…EMLARVRALL (117 aa). 4-aspartylphosphate is present on Asp-52. The segment at residues 132 to 231 is a DNA-binding region (ompR/PhoB-type); that stretch reads SEILNQGPLT…VYGAGYCLEL (100 aa).

In terms of assembly, interacts with reduced ferredoxin (petF). Interacts with CikA, RpaB, SasA, Sll0038 (pixG) and a number of other proteins. In terms of processing, phosphorylated by SasA; phosphorylation is maximal when KaiC phosphorylation is active during the circadian cycle. Dephosphorylated by CikA. CikA and SasA cooperation generates RpaA activity oscillation that is distinct from that generated by CikA or SasA alone and offset from the rhythm of KaiC phosphorylation.

Its subcellular location is the cytoplasm. In terms of biological role, response regulator of 2 two-component regulatory systems SasA/RpaA and CikA/RpaA involved in genome-wide circadian gene expression. The histidine kinases have opposing effects modulated by the clock oscillator proteins; SasA phosphorylates RpaA (stimulated by fully phosphorylated KaiC1) while CikA dephosphorylates phospho-RpaA (stimulated by the phospho-Ser-432-KaiC1-KaiB complex). Its function is as follows. The RpaA regulon is about 300 genes, and includes itself, cikA, sigE, sigG, genes involved in photosynthesis, carbon metabolism in the light and dark, phototaxis, CRISPR arrays 2 and 3 as well as nearly 90 ncRNAs. Genes are up- or down-regulated in its absence. Involved in regulation of primary sugar and amino acid metabolism and in adaptation to light changes. Regulates the accumulation of the monomeric photosystem I and the D1 protein under high light conditions. Overexpression causes cells to grow more slowly, increases levels of transcripts for clock oscillator genes in the light and the dark, increases levels of SigE protein, increases accumulation of sugar catabolic enzymes in the dark with concomitant decreases in most sugar metabolites. Plays a role in cell division; overexpression from the psbAII promoter increases expression of some cell-division-related genes, alters cell volume and changes the outer cell membrane and cell wall appearance. The chain is DNA-binding dual master transcriptional regulator RpaA from Synechocystis sp. (strain ATCC 27184 / PCC 6803 / Kazusa).